The following is a 233-amino-acid chain: Antiholin-like protein LrgB (233 aa).

The next 6 membrane-spanning stretches (helical) occupy residues 5–25 (LGIN…VIAT), 33–53 (GFFL…FLKL), 63–83 (IGGD…AIPL), 97–117 (IFGG…LVAI), 152–172 (LTSL…AKIV), and 212–232 (IAVV…APIL).

The protein belongs to the CidB/LrgB family. LrgB subfamily.

It is found in the cell membrane. In terms of biological role, inhibits the expression or activity of extracellular murein hydrolases by interacting, possibly with LrgA, with the holin-like proteins CidA and/or CidB. The LrgAB and CidAB proteins may affect the proton motive force of the membrane. May be involved in programmed cell death (PCD), possibly triggering PCD in response to antibiotics and environmental stresses. The sequence is that of Antiholin-like protein LrgB from Staphylococcus epidermidis (strain ATCC 35984 / DSM 28319 / BCRC 17069 / CCUG 31568 / BM 3577 / RP62A).